Consider the following 480-residue polypeptide: Type II methyltransferase M.NspV (480 aa).

This sequence belongs to the methyltransferase superfamily.

Functionally, a gamma subtype methylase that recognizes the double-stranded sequence 5'-TTCGAA-3', and methylates it on an unknown base to protect it against the NspV endonuclease. The sequence is that of Type II methyltransferase M.NspV from Nostoc sp. (strain ATCC 29411 / PCC 7524).